Reading from the N-terminus, the 287-residue chain is MSALSEILSYLIISFETSFTFHLEFKYKRTGIEKNESGVLVTVPRGKERQSSSEILDVFTQHIATLWPETQSSDQENEEEGEELEDAVAKEINSLQKKNKKELLTPIMLDMPCVYFVKTRPPIDPVRLVEFTCEVGKTKKMTRYTQRLIPIVRTTGVSLDDLEELAKSLIDPLFHEGQEGIKEFAVQANIRNHTVLKKDDIYRTVARIVGKQHMVDLKNFKLLILVQVIKNIIGISIVQNFEELRRFNLNEVYKQPENTKSIPNDSKLDNFDRDKNQIINDKAEHAE.

Residues 133–239 (CEVGKTKKMT…KNIIGISIVQ (107 aa)) form the THUMP domain. The tract at residues 257-287 (ENTKSIPNDSKLDNFDRDKNQIINDKAEHAE) is disordered. A compositionally biased stretch (basic and acidic residues) spans 266–287 (SKLDNFDRDKNQIINDKAEHAE).

This is an uncharacterized protein from Schizosaccharomyces pombe (strain 972 / ATCC 24843) (Fission yeast).